The primary structure comprises 1256 residues: Cohesin subunit SA-3 (1256 aa).

Residues 1 to 22 show a composition bias toward low complexity; sequence MPTLWSPSTQHHGSSSGSMSSP. Residues 1 to 110 are disordered; sequence MPTLWSPSTQ…GGNDKNKSVP (110 aa). Basic residues predominate over residues 72-83; the sequence is RNVRKRAAKRPP. Residues 324 to 409 form the SCD domain; it reads FVHRYRDILP…NRFKDRMVSM (86 aa). Disordered regions lie at residues 1096–1169 and 1230–1256; these read RRLQ…GPEL and KLLH…MEDF. Over residues 1113 to 1125 the composition is skewed to polar residues; it reads NSGPTTPTLTSTA. Positions 1126–1140 are enriched in basic residues; sequence VKRRQSPRTVGKRQK. Residues 1144-1166 are compositionally biased toward pro residues; that stretch reads GPGPGPGPGPGPGPGPGPGPGPG. Position 1234 is a phosphoserine (Ser-1234).

It belongs to the SCC3 family. In terms of assembly, component of the meiosis-specific cohesin complex, which also contains the SMC1 (SMC1A or SMC1B) and SMC3 heterodimer. Such complex likely contains RAD21, or the meiosis-specific related protein REC8. Interacts with CCDC79/TERB1; recruiting cohesin to telomeres to develop structural rigidity. Post-translationally, phosphorylated. Testis specific.

The protein localises to the nucleus. It is found in the chromosome. Functionally, meiosis specific component of cohesin complex. The cohesin complex is required for the cohesion of sister chromatids after DNA replication. The cohesin complex apparently forms a large proteinaceous ring within which sister chromatids can be trapped. At anaphase, the complex is cleaved and dissociates from chromatin, allowing sister chromatids to segregate. The meiosis-specific cohesin complex probably replaces mitosis specific cohesin complex when it dissociates from chromatin during prophase I. The chain is Cohesin subunit SA-3 (Stag3) from Rattus norvegicus (Rat).